Here is a 193-residue protein sequence, read N- to C-terminus: Potassium-transporting ATPase KdpC subunit (193 aa).

The helical transmembrane segment at 7 to 27 (PALVLFALLSALTGLAYPLAV) threads the bilayer.

This sequence belongs to the KdpC family. In terms of assembly, the system is composed of three essential subunits: KdpA, KdpB and KdpC.

Its subcellular location is the cell inner membrane. In terms of biological role, part of the high-affinity ATP-driven potassium transport (or Kdp) system, which catalyzes the hydrolysis of ATP coupled with the electrogenic transport of potassium into the cytoplasm. This subunit acts as a catalytic chaperone that increases the ATP-binding affinity of the ATP-hydrolyzing subunit KdpB by the formation of a transient KdpB/KdpC/ATP ternary complex. This is Potassium-transporting ATPase KdpC subunit from Variovorax paradoxus (strain S110).